The sequence spans 1294 residues: Phosphoribosylformylglycinamidine synthase (1294 aa).

A disordered region spans residues 303 to 325 (WPGAATGSGGEIRDEGATGRGSK). ATP contacts are provided by residues 305-316 (GAATGSGGEIRD), 384-386 (TGY), and Ala676. Mg(2+)-binding residues include Asp677, Glu716, Asn720, and Asp883. Ser885 provides a ligand contact to ATP. The region spanning 1041–1294 (VAVLREQGVN…MFRNARRQLG (254 aa)) is the Glutamine amidotransferase type-1 domain. Cys1134 functions as the Nucleophile in the catalytic mechanism. Active-site residues include His1259 and Glu1261.

The protein in the N-terminal section; belongs to the FGAMS family. Monomer.

Its subcellular location is the cytoplasm. It catalyses the reaction N(2)-formyl-N(1)-(5-phospho-beta-D-ribosyl)glycinamide + L-glutamine + ATP + H2O = 2-formamido-N(1)-(5-O-phospho-beta-D-ribosyl)acetamidine + L-glutamate + ADP + phosphate + H(+). The protein operates within purine metabolism; IMP biosynthesis via de novo pathway; 5-amino-1-(5-phospho-D-ribosyl)imidazole from N(2)-formyl-N(1)-(5-phospho-D-ribosyl)glycinamide: step 1/2. Functionally, phosphoribosylformylglycinamidine synthase involved in the purines biosynthetic pathway. Catalyzes the ATP-dependent conversion of formylglycinamide ribonucleotide (FGAR) and glutamine to yield formylglycinamidine ribonucleotide (FGAM) and glutamate. This is Phosphoribosylformylglycinamidine synthase from Pectobacterium atrosepticum (strain SCRI 1043 / ATCC BAA-672) (Erwinia carotovora subsp. atroseptica).